We begin with the raw amino-acid sequence, 106 residues long: ATP-dependent Clp protease adapter protein ClpS (106 aa).

This sequence belongs to the ClpS family. Binds to the N-terminal domain of the chaperone ClpA.

Its function is as follows. Involved in the modulation of the specificity of the ClpAP-mediated ATP-dependent protein degradation. This chain is ATP-dependent Clp protease adapter protein ClpS, found in Aliivibrio salmonicida (strain LFI1238) (Vibrio salmonicida (strain LFI1238)).